A 502-amino-acid polypeptide reads, in one-letter code: ATP synthase subunit alpha (502 aa).

Positions Val115–Met137 are disordered. Gly169–Thr176 provides a ligand contact to ATP.

It belongs to the ATPase alpha/beta chains family. F-type ATPases have 2 components, CF(1) - the catalytic core - and CF(0) - the membrane proton channel. CF(1) has five subunits: alpha(3), beta(3), gamma(1), delta(1), epsilon(1). CF(0) has three main subunits: a(1), b(2) and c(9-12). The alpha and beta chains form an alternating ring which encloses part of the gamma chain. CF(1) is attached to CF(0) by a central stalk formed by the gamma and epsilon chains, while a peripheral stalk is formed by the delta and b chains.

The protein resides in the cell membrane. The catalysed reaction is ATP + H2O + 4 H(+)(in) = ADP + phosphate + 5 H(+)(out). Produces ATP from ADP in the presence of a proton gradient across the membrane. The alpha chain is a regulatory subunit. The polypeptide is ATP synthase subunit alpha (Geobacillus kaustophilus (strain HTA426)).